We begin with the raw amino-acid sequence, 145 residues long: Large ribosomal subunit protein uL11 (145 aa).

Belongs to the universal ribosomal protein uL11 family. In terms of assembly, part of the ribosomal stalk of the 50S ribosomal subunit. Interacts with L10 and the large rRNA to form the base of the stalk. L10 forms an elongated spine to which L12 dimers bind in a sequential fashion forming a multimeric L10(L12)X complex. One or more lysine residues are methylated.

Its function is as follows. Forms part of the ribosomal stalk which helps the ribosome interact with GTP-bound translation factors. The polypeptide is Large ribosomal subunit protein uL11 (Rubrobacter xylanophilus (strain DSM 9941 / JCM 11954 / NBRC 16129 / PRD-1)).